A 149-amino-acid chain; its full sequence is Transcriptional regulator MraZ (149 aa).

SpoVT-AbrB domains are found at residues 7 to 54 (KYVN…GISH) and 83 to 126 (AVQL…QPQN).

This sequence belongs to the MraZ family. In terms of assembly, forms oligomers.

The protein localises to the cytoplasm. It localises to the nucleoid. This Rickettsia akari (strain Hartford) protein is Transcriptional regulator MraZ.